A 116-amino-acid chain; its full sequence is Iron-sulfur cluster insertion protein ErpA (116 aa).

The iron-sulfur cluster site is built by Cys44, Cys108, and Cys110.

The protein belongs to the HesB/IscA family. As to quaternary structure, homodimer. Requires iron-sulfur cluster as cofactor.

Functionally, required for insertion of 4Fe-4S clusters for at least IspG. This chain is Iron-sulfur cluster insertion protein ErpA, found in Shewanella baltica (strain OS223).